The chain runs to 211 residues: Ribonuclease HII (211 aa).

Positions 24–211 constitute an RNase H type-2 domain; the sequence is QLIAGVDEVG…KPVKKALGLD (188 aa). 3 residues coordinate a divalent metal cation: aspartate 30, glutamate 31, and aspartate 122.

Belongs to the RNase HII family. Mn(2+) is required as a cofactor. The cofactor is Mg(2+).

The protein localises to the cytoplasm. The enzyme catalyses Endonucleolytic cleavage to 5'-phosphomonoester.. Endonuclease that specifically degrades the RNA of RNA-DNA hybrids. In Vibrio parahaemolyticus serotype O3:K6 (strain RIMD 2210633), this protein is Ribonuclease HII.